Consider the following 300-residue polypeptide: Haloalkane dehalogenase (300 aa).

One can recognise an AB hydrolase-1 domain in the interval 32 to 155; that stretch reads AIVFQHGNPT…PAVRGVFQGF (124 aa). The active-site Nucleophile is aspartate 109. The Proton donor role is filled by glutamate 133. Residue histidine 273 is the Proton acceptor of the active site.

The protein belongs to the haloalkane dehalogenase family. Type 2 subfamily. As to quaternary structure, monomer.

It catalyses the reaction 1-haloalkane + H2O = a halide anion + a primary alcohol + H(+). Its function is as follows. Catalyzes hydrolytic cleavage of carbon-halogen bonds in halogenated aliphatic compounds, leading to the formation of the corresponding primary alcohols, halide ions and protons. This is Haloalkane dehalogenase from Mycobacterium tuberculosis (strain ATCC 25177 / H37Ra).